Consider the following 607-residue polypeptide: NAD-dependent protein deacetylase sir-2.1 (607 aa).

The segment at 1 to 68 is disordered; that stretch reads MSRDSGNDSE…SVSSESWQNN (68 aa). The span at 55 to 64 shows a compositional bias: low complexity; that stretch reads ESTTSVSSES. In terms of domain architecture, Deacetylase sirtuin-type spans 128–401; that stretch reads KLTNYNSLAD…DSIMEQQGKT (274 aa). NAD(+) is bound by residues 153–172 and 237–240; these read GAGV…DGIY and QNID. His-255 (proton acceptor) is an active-site residue. Zn(2+) contacts are provided by Cys-263, Cys-266, Cys-287, and Cys-290. NAD(+) is bound by residues 327 to 329, 352 to 354, and Cys-369; these read GSS and NRE. The interval 426–453 is disordered; the sequence is EKRNDDSSDEPTLKKPRMSVADDSMDSE.

Belongs to the sirtuin family. Class I subfamily. In terms of assembly, interacts with ftt-2 and par-5. Interacts with daf-16 following heat-shock, which causes daf-16 to accumulate in the nucleus. Interaction with daf-16 is promoted by ftt-2. Interacts with transcriptional coregulator hcf-1. Zn(2+) serves as cofactor.

The protein resides in the nucleus. It is found in the cytoplasm. It catalyses the reaction N(6)-acetyl-L-lysyl-[protein] + NAD(+) + H2O = 2''-O-acetyl-ADP-D-ribose + nicotinamide + L-lysyl-[protein]. Functionally, NAD-dependent deacetylase. Involved in metabolism, apoptosis, response to oxidative stress, response to DNA damage, and determination of lifespan. Required for a reduction of the 'Lys-16' acetylation of histone H4 (H4K16ac) on dosage-compensated X chromosomes in hermaphrodites. Plays a role in germ cell and somatic cell apoptosis in response to DNA damage. Functions upstream of daf-16/Forkhead box protein O in the Insulin/IGF-1-like signaling (IIS) mediated pathway, promoting daf-16 mediated transcriptional activation and increased lifespan. May also regulate lifespan independently of daf-16 by modulating the transcription of genes involved in the stress response of the endoplasmic reticulum (ER). Functions upstream of transcriptional coregulator hcf-1, perhaps acting independently of the IIS mediated pathway, to modulate lifespan and oxidative stress response. Acts upstream of the nicotinic acid metabolism pathway, which may be linked to the regulation of longevity. Plays a role in ascaroside-mediated longevity and stress resistance. The polypeptide is NAD-dependent protein deacetylase sir-2.1 (Caenorhabditis elegans).